Here is a 226-residue protein sequence, read N- to C-terminus: GTP-binding nuclear protein Ran (226 aa).

Residues 3 to 184 (DPISFKVILV…LSILRTLLND (182 aa)) form the Small GTPase Ran-type domain. 14–21 (DGATGKTT) provides a ligand contact to GTP. A switch-I region spans residues 33–41 (KQYISTIGV). GTP is bound by residues G70, 135–138 (NKCD), and 163–165 (SAK). A switch-II region spans residues 70-86 (GQEKFGGLRDGYYVDSD).

The protein belongs to the small GTPase superfamily. Ran family. In terms of assembly, found in a nuclear export complex with RanGTP, exportin and pre-miRNA.

It is found in the nucleus. Functionally, GTP-binding protein involved in nucleocytoplasmic transport. Required for the import of protein into the nucleus and also for RNA export. Involved in chromatin condensation and control of cell cycle. In Giardia intestinalis (Giardia lamblia), this protein is GTP-binding nuclear protein Ran.